The chain runs to 577 residues: Sensor protein ChvG (577 aa).

At 1-29 the chain is on the cytoplasmic side; the sequence is MRGQRRWAHPFTLIRRLFGNAVFSSLTRR. Residues 30–50 traverse the membrane as a helical segment; sequence IVFFNLVALVVLVGGIMYLNQ. At 51 to 260 the chain is on the periplasmic side; sequence FREGLIDARV…DIDKIVHAER (210 aa). Residues 261–281 traverse the membrane as a helical segment; sequence LAIIRVFGVAALVNVILSLLL. The Cytoplasmic portion of the chain corresponds to 282 to 577; that stretch reads SSTIANPLRR…VLSLPAGPHP (296 aa). Residues 283–339 form the HAMP domain; the sequence is STIANPLRRLSAAAIRVRRGGAKEREEIPDFSSRQDEIGNLSVALREMTTALYDRIA. The Histidine kinase domain maps to 347 to 575; that stretch reads DVSHELKNPL…RFVLSLPAGP (229 aa). At H350 the chain carries Phosphohistidine.

As to quaternary structure, homodimer.

The protein resides in the cell inner membrane. The enzyme catalyses ATP + protein L-histidine = ADP + protein N-phospho-L-histidine.. It participates in glycan metabolism; exopolysaccharide biosynthesis. In terms of biological role, member of a two-component regulatory system ChvG(ExoS)/ChvI involved in regulating the production of succinoglycan. Activates ChvI by phosphorylation. The sequence is that of Sensor protein ChvG (chvG) from Rhizobium meliloti (strain 1021) (Ensifer meliloti).